The chain runs to 135 residues: UPF0102 protein RPC_0320 (135 aa).

The protein belongs to the UPF0102 family.

The sequence is that of UPF0102 protein RPC_0320 from Rhodopseudomonas palustris (strain BisB18).